The sequence spans 221 residues: Deoxyribose-phosphate aldolase (221 aa).

Aspartate 89 serves as the catalytic Proton donor/acceptor. Catalysis depends on lysine 151, which acts as the Schiff-base intermediate with acetaldehyde. Lysine 180 (proton donor/acceptor) is an active-site residue.

The protein belongs to the DeoC/FbaB aldolase family. DeoC type 1 subfamily.

The protein resides in the cytoplasm. It carries out the reaction 2-deoxy-D-ribose 5-phosphate = D-glyceraldehyde 3-phosphate + acetaldehyde. The protein operates within carbohydrate degradation; 2-deoxy-D-ribose 1-phosphate degradation; D-glyceraldehyde 3-phosphate and acetaldehyde from 2-deoxy-alpha-D-ribose 1-phosphate: step 2/2. In terms of biological role, catalyzes a reversible aldol reaction between acetaldehyde and D-glyceraldehyde 3-phosphate to generate 2-deoxy-D-ribose 5-phosphate. The sequence is that of Deoxyribose-phosphate aldolase from Brevibacillus brevis (strain 47 / JCM 6285 / NBRC 100599).